Here is a 555-residue protein sequence, read N- to C-terminus: MLFTASLLLLLPWASAAPANLPIVDLGYQRHQAISFNSTGQYYSFTNIRYAEPPLGSRRFAPPVAPHGRSKNIVNGTGLGYKCPQALACWFNVQNKFTSAAAAGTPFDFNAAYEEVYTKDACTEPAKQDPLQSEDCLFLDVYVPQDVWQKGPQAAHQKGGAPVLVYLQDGAYVGGSKSDQNPAGLIARSREEGSSGMIYVGINYRLGVFGWLSGRKFTSSGGKPNAGLLDQRLALEWIQRHIHLFGGDPSRVTVMGVSAGGGSIIMQMTAYGRGISPPFAQVITQSPAWEPGTKTPAIEDDLFDTFLASLNVTSLDQARRLPSHALTDANYRLVASRPYGAGVLGPAIDGDFIPDSPKRLLLQGKANPGVRVLTSYTAAEGFGIAPANITDEASFQRYVGLMLAGTDASVRTHAATVLYPAVFDGSMPYRTQHDRASLLWADLAASCNTRYLHAAVRTPGYAIEYSVPPALHLSDTPSVFYNGPVADPTVNGTIAELLQRQIVRFVKTGNPNGEPDPEVPVYDGRDLLDLGDDGVLVRPDSTDNARCEYWQKVHF.

An N-terminal signal peptide occupies residues 1 to 16; that stretch reads MLFTASLLLLLPWASA. N-linked (GlcNAc...) asparagine glycosylation is found at N37 and N75. The Acyl-ester intermediate role is filled by S258. A substrate-binding site is contributed by S258. An N-linked (GlcNAc...) asparagine glycan is attached at N311. E380 serves as the catalytic Charge relay system. N388 and N491 each carry an N-linked (GlcNAc...) asparagine glycan.

It belongs to the type-B carboxylesterase/lipase family.

It localises to the cytoplasm. It is found in the cytosol. The enzyme catalyses a carboxylic ester + H2O = an alcohol + a carboxylate + H(+). It participates in mycotoxin biosynthesis; patulin biosynthesis. Its function is as follows. Carboxylesterase; part of the gene cluster that mediates the biosynthesis of patulin, an acetate-derived tetraketide mycotoxin produced by several fungal species that shows antimicrobial properties against several bacteria. The function of patB in patulin synthesis has still to be characterized. The pathway begins with the synthesis of 6-methylsalicylic acid by the polyketide synthase (PKS) patK via condensation of acetate and malonate units. The 6-methylsalicylic acid decarboxylase patG then catalyzes the decarboxylation of 6-methylsalicylic acid to yield m-cresol (also known as 3-methylphenol). These first reactions occur in the cytosol. The intermediate m-cresol is then transported into the endoplasmic reticulum where the cytochrome P450 monooxygenase patH converts it to m-hydroxybenzyl alcohol, which is further converted to gentisyl alcohol by the cytochrome P450 monooxygenase patI. The oxidoreductases patJ and patO further convert gentisyl alcohol to isoepoxydon in the vacuole. PatN catalyzes then the transformation of isoepoxydon into phyllostine. The cluster protein patF is responsible for the conversion from phyllostine to neopatulin whereas the alcohol dehydrogenase patD converts neopatulin to E-ascladiol. The steps between isoepoxydon and E-ascladiol occur in the cytosol, and E-ascladiol is probably secreted to the extracellular space by one of the cluster-specific transporters patC or patM. Finally, the secreted patulin synthase patE catalyzes the conversion of E-ascladiol to patulin. The polypeptide is Carboxylesterase patB (Aspergillus clavatus (strain ATCC 1007 / CBS 513.65 / DSM 816 / NCTC 3887 / NRRL 1 / QM 1276 / 107)).